The chain runs to 231 residues: Enolase-phosphatase E1 (231 aa).

Residues Asp11 and Glu13 each contribute to the Mg(2+) site. Substrate contacts are provided by residues 125–126 and Lys162; that span reads SS. Residue Asp188 coordinates Mg(2+).

Belongs to the HAD-like hydrolase superfamily. MasA/MtnC family. In terms of assembly, monomer. Mg(2+) serves as cofactor.

It is found in the cytoplasm. The protein localises to the nucleus. The enzyme catalyses 5-methylsulfanyl-2,3-dioxopentyl phosphate + H2O = 1,2-dihydroxy-5-(methylsulfanyl)pent-1-en-3-one + phosphate. It participates in amino-acid biosynthesis; L-methionine biosynthesis via salvage pathway; L-methionine from S-methyl-5-thio-alpha-D-ribose 1-phosphate: step 3/6. Its pathway is amino-acid biosynthesis; L-methionine biosynthesis via salvage pathway; L-methionine from S-methyl-5-thio-alpha-D-ribose 1-phosphate: step 4/6. Functionally, bifunctional enzyme that catalyzes the enolization of 2,3-diketo-5-methylthiopentyl-1-phosphate (DK-MTP-1-P) into the intermediate 2-hydroxy-3-keto-5-methylthiopentenyl-1-phosphate (HK-MTPenyl-1-P), which is then dephosphorylated to form the acireductone 1,2-dihydroxy-3-keto-5-methylthiopentene (DHK-MTPene). The chain is Enolase-phosphatase E1 from Pyricularia oryzae (strain 70-15 / ATCC MYA-4617 / FGSC 8958) (Rice blast fungus).